Consider the following 309-residue polypeptide: Protease HtpX homolog (309 aa).

The next 2 membrane-spanning stretches (helical) occupy residues 7-27 (AILL…IGGA) and 28-48 (SGAM…YWNS). Position 130 (His-130) interacts with Zn(2+). The active site involves Glu-131. Position 134 (His-134) interacts with Zn(2+). Transmembrane regions (helical) follow at residues 145-165 (VTAT…FFGG) and 173-193 (GLGV…AMLV). Zn(2+) is bound at residue Glu-202.

It belongs to the peptidase M48B family. Requires Zn(2+) as cofactor.

It localises to the cell inner membrane. This chain is Protease HtpX homolog, found in Rhodopseudomonas palustris (strain BisA53).